The sequence spans 799 residues: METIGFMKNIETFAFPKQETVAMDDRAAASNFLGQPPVGGPPVKDLSALKRPASEMVKSHVGLFSPVKRRRHCGHSSVSDLARSASCVRSLAMKAKNTWMSNVPVMSSTHLVKRECPPVQGADLSDNLATASSPAHTGKGYTPFEDICLKQLLEVSRHKLFRSLEEVRGSDVRHDSRCDVPRAVRCRSLPSRMTPEKNSAEVSIGGLKDQSPSTSIRSNLVSSLLGVSRRDDQETSDSCHDDDDDRAINDSERYDVSECDESGPPTPSSGFIDIEADTPPCSPLNLTTTGGDSVSQLFHSSGHGVGDRQRNTASTDAKSSHIKSKSEDATKDKLGPCCCCGTTCSGGTCKEKKTNFSIDAILRPDFGSGNFLGQDGHTFQPNEDHQTVSSAQTTPRFSSPDSAFKVVDLRTRSRSESLSSPSSSSSSSRSSPSPPLTSPVSLRQKWERQTGSFMRRHLKGQEHFNFPQSLFPNPSKDLENFIGRDFPFISPPQGNPLVKFPNIFPDQLSHLHPAMPAECVDPRTFYYAPENFLSKGQQPLLSYDMSKLFGRSLHPFLNSPPKPQPQKRPGHHLAPTPVEGVTLKSVGTNHNPKVLPEVKTPVQSPQGDQKKRSRDESASKGKQVADQNVHLKENSQKSDPVLKQEKGNRKVSPAGASPETDKAKNPLWPAWVFCTRYSDRPSSGPRSRKPKRSKAQDEKRPRTAFTNDQLQRLKREFDECRYLTETRRKNLADELGLTESQIKIWFQNKRAKIKKSVGVRNPLALQLMEQGLYNHSTIKEMMEEGMYPHTPSQAGDDSS.

4 disordered regions span residues 189–331 (LPSR…DATK), 369–444 (GNFL…SLRQ), 554–664 (HPFL…DKAK), and 678–705 (SDRP…RTAF). Polar residues predominate over residues 210–222 (QSPSTSIRSNLVS). Composition is skewed to basic and acidic residues over residues 228–239 (SRRDDQETSDSC) and 246–256 (RAINDSERYDV). 2 stretches are compositionally biased toward polar residues: residues 284-299 (LNLT…QLFH) and 377-401 (HTFQ…SSPD). The segment covering 416 to 431 (ESLSSPSSSSSSSRSS) has biased composition (low complexity). Basic and acidic residues-rich tracts occupy residues 608-619 (DQKKRSRDESAS) and 629-648 (VHLK…EKGN). The homeobox DNA-binding region spans 698–757 (EKRPRTAFTNDQLQRLKREFDECRYLTETRRKNLADELGLTESQIKIWFQNKRAKIKKSV).

The protein belongs to the engrailed homeobox family. In terms of tissue distribution, expressed in the dorsal ectoderm of early gastrulae in a band corresponding to the peripheral area of the presumptive shell gland. Also expressed at four points along the posterior ectoderm. In late gastrulae, it is predominantly expressed in the peripheral ectoderm of the shell gland and in spots at the posterior end behind the presumptive foot. Expressed in late trochophore larvae at four points behind the foot, at two locations at the base of the foot and in the peripheral ectoderm of the shell gland.

It localises to the nucleus. Its function is as follows. May be involved in shell and shell gland formation during development. This Lymnaea stagnalis (Great pond snail) protein is Homeobox protein engrailed.